The sequence spans 88 residues: ATP synthase F(0) complex subunit f, mitochondrial (88 aa).

Position 2 is an N-acetylalanine (alanine 2). Phosphoserine is present on serine 3. N6-acetyllysine is present on lysine 16. The chain crosses the membrane as a helical span at residues 62–79 (MVLAAYVFLNYCRSYKEL).

As to quaternary structure, component of the ATP synthase complex composed at least of ATP5F1A/subunit alpha, ATP5F1B/subunit beta, ATP5MC1/subunit c (homooctomer), MT-ATP6/subunit a, MT-ATP8/subunit 8, ATP5ME/subunit e, ATP5MF/subunit f, ATP5MG/subunit g, ATP5MK/subunit k, ATP5MJ/subunit j, ATP5F1C/subunit gamma, ATP5F1D/subunit delta, ATP5F1E/subunit epsilon, ATP5PF/subunit F6, ATP5PB/subunit b, ATP5PD/subunit d, ATP5PO/subunit OSCP. ATP synthase complex consists of a soluble F(1) head domain (subunits alpha(3) and beta(3)) - the catalytic core - and a membrane F(0) domain - the membrane proton channel (subunits c, a, 8, e, f, g, k and j). These two domains are linked by a central stalk (subunits gamma, delta, and epsilon) rotating inside the F1 region and a stationary peripheral stalk (subunits F6, b, d, and OSCP).

It localises to the mitochondrion. The protein localises to the mitochondrion inner membrane. In terms of biological role, subunit f, of the mitochondrial membrane ATP synthase complex (F(1)F(0) ATP synthase or Complex V) that produces ATP from ADP in the presence of a proton gradient across the membrane which is generated by electron transport complexes of the respiratory chain. ATP synthase complex consist of a soluble F(1) head domain - the catalytic core - and a membrane F(1) domain - the membrane proton channel. These two domains are linked by a central stalk rotating inside the F(1) region and a stationary peripheral stalk. During catalysis, ATP synthesis in the catalytic domain of F(1) is coupled via a rotary mechanism of the central stalk subunits to proton translocation. In vivo, can only synthesize ATP although its ATP hydrolase activity can be activated artificially in vitro. Part of the complex F(0) domain. The sequence is that of ATP synthase F(0) complex subunit f, mitochondrial from Bos taurus (Bovine).